The following is a 145-amino-acid chain: Peroxide operon regulator (145 aa).

The tract at residues 1–78 (MAAHELKEAL…SGLVKELTYG (78 aa)) is DNA-binding. 4 residues coordinate Zn(2+): cysteine 96, cysteine 99, cysteine 136, and cysteine 139.

It belongs to the Fur family. In terms of assembly, homodimer. Mn(2+) is required as a cofactor. Fe(2+) serves as cofactor. The cofactor is Zn(2+). In terms of processing, possibly oxidized on a cysteine residue; the Cys-SOH formed in response to oxidative signaling may rapidly react with a Cys-SH to form a disulfide bond, leading to the loss of metal ion and inactivation of repressor function. Oxidized PerR can be further reduced by thiol reductants and repressor activity restored.

The protein localises to the cytoplasm. Functionally, hydrogen and organic peroxide sensor. Represses the expression of a regulon of peroxide-inducible genes such as katA, ahpC, ahpF, the heme biosynthesis operon (hemAXCDBL), fur, perR, zosA and mrgA. This is Peroxide operon regulator (perR) from Bacillus subtilis (strain 168).